Consider the following 720-residue polypeptide: Cyclopenase penL (720 aa).

3 residues coordinate Cu cation: His137, His141, and His313.

This sequence belongs to the tyrosinase family. It depends on Cu(2+) as a cofactor.

It carries out the reaction (-)-cyclopenine = viridicatin + methyl isocyanate + H(+). The catalysed reaction is (-)-4'-methoxycyclopenine = 4'-methoxyviridicatin + methyl isocyanate + H(+). It functions in the pathway secondary metabolite biosynthesis. Its pathway is alkaloid biosynthesis. The protein operates within mycotoxin biosynthesis. Cyclopenase; part of the gene cluster that mediates the biosynthesis of penigequinolones, potent insecticidal alkaloids that contain a highly modified 10-carbon prenyl group. The first stage is catalyzed by the nonribosomal peptide synthetase penN that condenses anthranilic acid and O-methyl-L-tyrosine to produce 4'-methoxycyclopeptin. 4'-methoxycyclopeptin is then converted to 4'-methoxydehydrocyclopeptin by the ketoglutarate-dependent dioxygenase penM through dehydrogenation to form a double bond between C-alpha and C-beta of the O-methyltyrosine side chain. PenM also converts its first product methoxydehydrocyclopeptin to 4'-methoxycyclopenin. The following conversion of 4'methoxycyclopenin into 4'-methoxyviridicatin is catalyzed by the cyclopenase penL. 4'-methoxyviridicatin is the precursor of quinolone natural products, and is further converted to quinolinone B. The prenyltransferase penI then catalyzes the canonical Friedel-Crafts alkylation of quinolinone B with dimethylallyl cation to yield dimethylallyl quinolone, which is subjected to FAD-dependent dehydrogenation by the FAD-linked oxidoreductase penH to yield conjugated aryl diene. The delta(3') double bond then serves as the site of the second alkylation with DMAPP catalyzed by the prenyltransferase penG to yield a carbenium ion intermediate, which can be attacked by H(2)O to yield a styrenyl quinolone containing a C3'-hydroxyprenyl chain, or undergo cyclization to yield yaequinolones J1 and J2. The conversion of the styrenyl quinolone into the tetrahydrofuran-containing yaequinolone C is performed by the FAD-dependent monooxygenase penE and involves epoxidation of the terminal C7'-C8' olefin, followed by epoxide ring opening initiated by the C3' hydroxyl group. The predicted cysteine hydrolase penJ acts as an epoxide hydrolase that enhances the rate of the 5-exo-tet cyclization step, increasing the yield of yaequinolone C. PenF catalyzes the cationic rearrangement of the epoxide formed by penE (before ring opening to produce yaequinolone C) into yaequinolone D. Finally, the short-chain dehydrogenase/reductase (SDR)-like reductase penD, catalyzes both the dehydration of yaequinolone D and the reduction of the resulting oxonium to yield penigequinolone. In Penicillium thymicola, this protein is Cyclopenase penL.